The chain runs to 536 residues: Inactive beta-amylase 9 (536 aa).

Ser47 carries the phosphoserine modification. A disordered region spans residues 511 to 536 (QASEAEVEAETASIGSGTGAPSLQTA).

This sequence belongs to the glycosyl hydrolase 14 family. As to expression, mostly expressed in young floral buds, flowers and roots, and, to a later extent, in stems and leaves.

The protein localises to the cytoplasm. In Arabidopsis thaliana (Mouse-ear cress), this protein is Inactive beta-amylase 9 (BAM9).